The chain runs to 386 residues: GTPase Obg (386 aa).

In terms of domain architecture, Obg spans 1-159 (MKFVDEAKIK…RNLLLELLLL (159 aa)). The OBG-type G domain maps to 160 to 333 (ADVGMLGLPN…LCRDVVEYLE (174 aa)). Residues 166–173 (GLPNAGKS), 191–195 (FTTLV), 213–216 (DIPG), 283–286 (NKTD), and 314–316 (AAI) each bind GTP. Serine 173 and threonine 193 together coordinate Mg(2+).

The protein belongs to the TRAFAC class OBG-HflX-like GTPase superfamily. OBG GTPase family. Monomer. It depends on Mg(2+) as a cofactor.

Its subcellular location is the cytoplasm. An essential GTPase which binds GTP, GDP and possibly (p)ppGpp with moderate affinity, with high nucleotide exchange rates and a fairly low GTP hydrolysis rate. Plays a role in control of the cell cycle, stress response, ribosome biogenesis and in those bacteria that undergo differentiation, in morphogenesis control. In Psychromonas ingrahamii (strain DSM 17664 / CCUG 51855 / 37), this protein is GTPase Obg.